The following is a 747-amino-acid chain: Myotubularin-related protein 12 (747 aa).

Gly residues predominate over residues 1 to 14 (MLGKGVVGGGGGTK). The segment at 1–21 (MLGKGVVGGGGGTKGPKPSFV) is disordered. One can recognise a Myotubularin phosphatase domain in the interval 205–643 (FDTLKDWCWE…PEIKVWAQRY (439 aa)). The interval 449–558 (VPVFLLFLDC…KGQRKGMRFK (110 aa)) is interaction with MTM1. 3 positions are modified to phosphoserine: Ser-564, Ser-601, and Ser-716.

The protein belongs to the protein-tyrosine phosphatase family. Non-receptor class myotubularin subfamily. Heterodimer with lipid phosphatase MTM1. Heterodimer with lipid phosphatase MTMR2.

It localises to the cytoplasm. It is found in the sarcoplasmic reticulum. The protein resides in the myofibril. The protein localises to the sarcomere. In terms of biological role, acts as an adapter for the myotubularin-related phosphatases. Regulates phosphatase MTM1 protein stability and possibly its intracellular location. By stabilizing MTM1 protein levels, required for skeletal muscle maintenance but not for myogenesis. The sequence is that of Myotubularin-related protein 12 (MTMR12) from Pongo abelii (Sumatran orangutan).